Consider the following 205-residue polypeptide: Dr1-associated corepressor (205 aa).

The Histone-fold domain occupies 14–77 (PARIKKIMQT…SHLKQCIELE (64 aa)). A disordered region spans residues 91-205 (PDMQGDGEDN…DAEDEEDYDS (115 aa)). A compositionally biased stretch (basic and acidic residues) spans 98 to 108 (EDNHVDGDKGP). The segment covering 138-155 (SEQEDESEDTDTDGEEET) has biased composition (acidic residues). The span at 172–192 (PPTPFIPFTSPLPLPPAPPGP) shows a compositional bias: pro residues. Over residues 196–205 (DAEDEEDYDS) the composition is skewed to acidic residues.

This sequence belongs to the NC2 alpha/DRAP1 family. In terms of assembly, heterodimer with DR1. Binds BTAF1. Post-translationally, phosphorylation reduces DNA binding, but has no effect on heterodimerization and TBP binding.

Its subcellular location is the nucleus. Its function is as follows. The association of the DR1/DRAP1 heterodimer with TBP results in a functional repression of both activated and basal transcription of class II genes. This interaction precludes the formation of a transcription-competent complex by inhibiting the association of TFIIA and/or TFIIB with TBP. Can bind to DNA on its own. The protein is Dr1-associated corepressor (Drap1) of Mus musculus (Mouse).